The chain runs to 560 residues: NAD(P)H-quinone oxidoreductase chain 4-3 (560 aa).

Transmembrane regions (helical) follow at residues 5–25 (FPWLTAIILLPLVASAFIPLL), 35–55 (WYALGVGIADFVLMCYTFWHH), 86–106 (ISMPLVLLAGFVTTLSMLAAW), 114–134 (LFYFLMLVLYSAQIGVFVAQD), 135–155 (LLLFFIMWELELVPVYLLVSI), 168–188 (FLLYTAAASIFILIAGLAMAL), 208–228 (ALELLLYAGLLIAFGVKLAIF), 242–262 (SAPVSMILAGVLLKMGGYGLI), 273–293 (HIYFAPVLATLGVINIIYGGL), 310–330 (VSHMGFVLLGIASFTDVGVSG), 331–351 (AMLQMLSHGLIAAVLFFLAGV), 374–394 (VFALFTAGTMASLALPGMSGF), 417–437 (VMVFLAAVGVILTPIYLLSML), and 488–508 (VFIAVSFLVLIIGVGVYPKIA).

It belongs to the complex I subunit 4 family.

It is found in the cellular thylakoid membrane. It catalyses the reaction a plastoquinone + NADH + (n+1) H(+)(in) = a plastoquinol + NAD(+) + n H(+)(out). The catalysed reaction is a plastoquinone + NADPH + (n+1) H(+)(in) = a plastoquinol + NADP(+) + n H(+)(out). Functionally, NDH-1 shuttles electrons from NAD(P)H, via FMN and iron-sulfur (Fe-S) centers, to quinones in the respiratory chain. The immediate electron acceptor for the enzyme in this species is believed to be plastoquinone. Couples the redox reaction to proton translocation (for every two electrons transferred, four hydrogen ions are translocated across the cytoplasmic membrane), and thus conserves the redox energy in a proton gradient. The protein is NAD(P)H-quinone oxidoreductase chain 4-3 (ndhD3) of Nostoc sp. (strain PCC 7120 / SAG 25.82 / UTEX 2576).